We begin with the raw amino-acid sequence, 419 residues long: tRNA(Ile)-lysidine synthase (419 aa).

31 to 36 contributes to the ATP binding site; the sequence is SGGGDS.

The protein belongs to the tRNA(Ile)-lysidine synthase family.

It localises to the cytoplasm. It carries out the reaction cytidine(34) in tRNA(Ile2) + L-lysine + ATP = lysidine(34) in tRNA(Ile2) + AMP + diphosphate + H(+). Functionally, ligates lysine onto the cytidine present at position 34 of the AUA codon-specific tRNA(Ile) that contains the anticodon CAU, in an ATP-dependent manner. Cytidine is converted to lysidine, thus changing the amino acid specificity of the tRNA from methionine to isoleucine. This is tRNA(Ile)-lysidine synthase from Ruegeria pomeroyi (strain ATCC 700808 / DSM 15171 / DSS-3) (Silicibacter pomeroyi).